Consider the following 300-residue polypeptide: uncharacterized protein (300 aa).

A divalent metal cation-binding residues include glutamate 146, glutamate 148, and aspartate 177.

It belongs to the FAH family.

This is an uncharacterized protein from Staphylococcus aureus (strain MW2).